A 363-amino-acid polypeptide reads, in one-letter code: NAD(P)H-quinone oxidoreductase subunit 1, chloroplastic (363 aa).

6 consecutive transmembrane segments (helical) span residues 30-50, 98-118, 129-149, 248-268, 300-320, and 343-363; these read LVPI…IVWL, FSIG…VIPF, IGIF…LMSG, YSGI…LLSS, IIGT…FLFI, and FLLP…LLSL.

It belongs to the complex I subunit 1 family. In terms of assembly, NDH is composed of at least 16 different subunits, 5 of which are encoded in the nucleus.

It localises to the plastid. The protein localises to the chloroplast thylakoid membrane. It catalyses the reaction a plastoquinone + NADH + (n+1) H(+)(in) = a plastoquinol + NAD(+) + n H(+)(out). The catalysed reaction is a plastoquinone + NADPH + (n+1) H(+)(in) = a plastoquinol + NADP(+) + n H(+)(out). In terms of biological role, NDH shuttles electrons from NAD(P)H:plastoquinone, via FMN and iron-sulfur (Fe-S) centers, to quinones in the photosynthetic chain and possibly in a chloroplast respiratory chain. The immediate electron acceptor for the enzyme in this species is believed to be plastoquinone. Couples the redox reaction to proton translocation, and thus conserves the redox energy in a proton gradient. The sequence is that of NAD(P)H-quinone oxidoreductase subunit 1, chloroplastic from Gossypium hirsutum (Upland cotton).